Consider the following 176-residue polypeptide: Inorganic pyrophosphatase (176 aa).

Substrate contacts are provided by Lys30, Arg44, and Tyr56. Positions 66, 71, and 103 each coordinate Mg(2+). Tyr142 serves as a coordination point for substrate.

Belongs to the PPase family. As to quaternary structure, homohexamer. It depends on Mg(2+) as a cofactor.

The protein resides in the cytoplasm. It catalyses the reaction diphosphate + H2O = 2 phosphate + H(+). In terms of biological role, catalyzes the hydrolysis of inorganic pyrophosphate (PPi) forming two phosphate ions. This chain is Inorganic pyrophosphatase, found in Escherichia coli O157:H7.